A 55-amino-acid chain; its full sequence is Photosystem II reaction center X protein (55 aa).

Residues 24 to 44 (IGSFLAAAALIVVPAASFLLW) traverse the membrane as a helical segment.

It belongs to the PsbX family. Type 2 subfamily. PSII consists of a core antenna complex that captures photons, and an electron transfer chain that converts photonic excitation into a charge separation. PSII forms dimeric complexes.

The protein resides in the cellular thylakoid membrane. Functionally, involved in the binding and/or turnover of quinones at the Q(B) site of Photosystem II. The protein is Photosystem II reaction center X protein of Prochlorococcus marinus (strain SARG / CCMP1375 / SS120).